A 148-amino-acid chain; its full sequence is MTPELNLKSLGAKTPYIFEYNSDLLEAFPNPNPNLDPLITLECKEFTSLCPITSQPDFGVIFIRYIPKDKMVESKSLKLYLFSYRNHGSFHESCINTILLDLVQLLEPKYLEVYGDFASRGGIAIKPFVNYAIKEYQEFKEKRLLNAK.

Cys50 acts as the Thioimide intermediate in catalysis. Asp57 acts as the Proton donor in catalysis. Substrate contacts are provided by residues 72 to 74 and 91 to 92; these read VES and HE.

The protein belongs to the GTP cyclohydrolase I family. QueF type 1 subfamily.

The protein localises to the cytoplasm. The enzyme catalyses 7-aminomethyl-7-carbaguanine + 2 NADP(+) = 7-cyano-7-deazaguanine + 2 NADPH + 3 H(+). Its pathway is tRNA modification; tRNA-queuosine biosynthesis. Functionally, catalyzes the NADPH-dependent reduction of 7-cyano-7-deazaguanine (preQ0) to 7-aminomethyl-7-deazaguanine (preQ1). This Helicobacter pylori (strain G27) protein is NADPH-dependent 7-cyano-7-deazaguanine reductase.